The chain runs to 444 residues: Trigger factor (444 aa).

Residues 166–251 (GDQVVIDFEG…VHAVKAPKPA (86 aa)) form the PPIase FKBP-type domain.

This sequence belongs to the FKBP-type PPIase family. Tig subfamily.

The protein resides in the cytoplasm. It catalyses the reaction [protein]-peptidylproline (omega=180) = [protein]-peptidylproline (omega=0). In terms of biological role, involved in protein export. Acts as a chaperone by maintaining the newly synthesized protein in an open conformation. Functions as a peptidyl-prolyl cis-trans isomerase. The chain is Trigger factor (tig) from Rhodobacter capsulatus (strain ATCC BAA-309 / NBRC 16581 / SB1003).